We begin with the raw amino-acid sequence, 530 residues long: Estrogen receptor beta (530 aa).

A modulating region spans residues 1 to 148; sequence MDIKNSPSSL…GPSSKRDAHF (148 aa). Ser61 carries the post-translational modification Phosphoserine; alternate. The O-linked (GlcNAc) serine; alternate glycan is linked to Ser61. Residues Ser87 and Ser105 each carry the phosphoserine; by MAPK modification. 2 NR C4-type zinc fingers span residues 149 to 169 and 185 to 209; these read CAVC…CEGC and CPAT…LRKC. A DNA-binding region (nuclear receptor) is located at residues 149–214; the sequence is CAVCSDYASG…RLRKCYEVGM (66 aa). The NR LBD domain occupies 264–498; sequence SPEQLVLTLL…DLLLEMMNAH (235 aa). The tract at residues 507 to 530 is disordered; it reads ITGSECSPAEDSKSTEGSQNPQSP. Residues 521-530 show a composition bias toward polar residues; the sequence is TEGSQNPQSP.

It belongs to the nuclear hormone receptor family. NR3 subfamily. As to quaternary structure, binds DNA as a homodimer. Can form a heterodimer with ESR1. Interacts with NCOA1, NCOA3, NCOA5 and NCOA6 coactivators, leading to a strong increase of transcription of target genes. Interacts with UBE1C and AKAP13. Interacts with DNTTIP2. Interacts with CCDC62 in the presence of estradiol/E2; this interaction seems to enhance the transcription of target genes. Interacts with DNAAF4. Interacts with PRMT2. Interacts with CCAR2 (via N-terminus) in a ligand-independent manner. Interacts with RBM39, in the presence of estradiol (E2). Interacts with STUB1/CHIP. In terms of processing, phosphorylation at Ser-87 and Ser-105 recruits NCOA1.

It is found in the nucleus. In terms of biological role, nuclear hormone receptor. Binds estrogens with an affinity similar to that of ESR1/ER-alpha, and activates expression of reporter genes containing estrogen response elements (ERE) in an estrogen-dependent manner. This is Estrogen receptor beta (ESR2) from Callithrix jacchus (White-tufted-ear marmoset).